Consider the following 491-residue polypeptide: Inositol-pentakisphosphate 2-kinase (491 aa).

Residues 136–140 (EIKPK) carry the EXKPK motif motif. The residue at position 282 (Ser-282) is a Phosphoserine.

This sequence belongs to the IPK1 type 2 family. As to expression, ubiquitously expressed, with high expression in heart, brain, testis and placenta.

The protein resides in the cytoplasm. It is found in the nucleus. It catalyses the reaction 1D-myo-inositol 1,3,4,5,6-pentakisphosphate + ATP = 1D-myo-inositol hexakisphosphate + ADP + H(+). In terms of biological role, phosphorylates Ins(1,3,4,5,6)P5 at position 2 to form Ins(1,2,3,4,5,6)P6 (InsP6 or phytate). InsP6 is involved in many processes such as mRNA export, non-homologous end-joining, endocytosis, ion channel regulation. It also protects cells from TNF-alpha-induced apoptosis. The sequence is that of Inositol-pentakisphosphate 2-kinase (IPPK) from Homo sapiens (Human).